The primary structure comprises 138 residues: Large ribosomal subunit protein uL16 (138 aa).

Positions 1–13 (MLQPKRRKYRKEQ) are enriched in basic residues. The segment at 1 to 24 (MLQPKRRKYRKEQKGRNTGKATRG) is disordered.

Belongs to the universal ribosomal protein uL16 family. As to quaternary structure, part of the 50S ribosomal subunit.

Its function is as follows. Binds 23S rRNA and is also seen to make contacts with the A and possibly P site tRNAs. This is Large ribosomal subunit protein uL16 from Cupriavidus necator (strain ATCC 17699 / DSM 428 / KCTC 22496 / NCIMB 10442 / H16 / Stanier 337) (Ralstonia eutropha).